We begin with the raw amino-acid sequence, 250 residues long: Coproheme decarboxylase (250 aa).

Fe-coproporphyrin III-binding positions include Arg-131, 145 to 149, His-172, and Gln-185; that span reads YPMNK. Tyr-145 is an active-site residue.

Belongs to the ChdC family. Type 1 subfamily. The cofactor is Fe-coproporphyrin III.

It catalyses the reaction Fe-coproporphyrin III + 2 H2O2 + 2 H(+) = heme b + 2 CO2 + 4 H2O. It carries out the reaction Fe-coproporphyrin III + H2O2 + H(+) = harderoheme III + CO2 + 2 H2O. The catalysed reaction is harderoheme III + H2O2 + H(+) = heme b + CO2 + 2 H2O. Its pathway is porphyrin-containing compound metabolism; protoheme biosynthesis. Involved in coproporphyrin-dependent heme b biosynthesis. Catalyzes the decarboxylation of Fe-coproporphyrin III (coproheme) to heme b (protoheme IX), the last step of the pathway. The reaction occurs in a stepwise manner with a three-propionate intermediate. The protein is Coproheme decarboxylase of Staphylococcus aureus (strain bovine RF122 / ET3-1).